Consider the following 510-residue polypeptide: 2,3-bisphosphoglycerate-independent phosphoglycerate mutase (510 aa).

Asp-14 and Ser-64 together coordinate Mn(2+). Ser-64 serves as the catalytic Phosphoserine intermediate. Residues His-125, 155–156, Arg-187, Arg-193, 259–262, and Lys-332 each bind substrate; these read RD and RADR. 5 residues coordinate Mn(2+): Asp-399, His-403, Asp-440, His-441, and His-459.

It belongs to the BPG-independent phosphoglycerate mutase family. As to quaternary structure, monomer. Mn(2+) serves as cofactor.

It catalyses the reaction (2R)-2-phosphoglycerate = (2R)-3-phosphoglycerate. It functions in the pathway carbohydrate degradation; glycolysis; pyruvate from D-glyceraldehyde 3-phosphate: step 3/5. Its function is as follows. Catalyzes the interconversion of 2-phosphoglycerate and 3-phosphoglycerate. Essential for the growth and pathogenicity on the host plant. This chain is 2,3-bisphosphoglycerate-independent phosphoglycerate mutase, found in Pseudomonas syringae pv. tomato (strain ATCC BAA-871 / DC3000).